Reading from the N-terminus, the 307-residue chain is uncharacterized protein (307 aa).

An HTH lysR-type domain is found at 11–68; it reads IRLRHLHTFVAVAQQGTLGRAAETLNLSQPALSKTLNELEQLTGARLFERGRQGAQLT. Positions 28 to 47 form a DNA-binding region, H-T-H motif; sequence LGRAAETLNLSQPALSKTLN.

This sequence belongs to the LysR transcriptional regulatory family.

This is an uncharacterized protein from Escherichia coli (strain K12).